The chain runs to 220 residues: Deoxyribose-phosphate aldolase (220 aa).

Aspartate 92 (proton donor/acceptor) is an active-site residue. Lysine 155 (schiff-base intermediate with acetaldehyde) is an active-site residue. Catalysis depends on lysine 184, which acts as the Proton donor/acceptor.

The protein belongs to the DeoC/FbaB aldolase family. DeoC type 1 subfamily.

It localises to the cytoplasm. The enzyme catalyses 2-deoxy-D-ribose 5-phosphate = D-glyceraldehyde 3-phosphate + acetaldehyde. The protein operates within carbohydrate degradation; 2-deoxy-D-ribose 1-phosphate degradation; D-glyceraldehyde 3-phosphate and acetaldehyde from 2-deoxy-alpha-D-ribose 1-phosphate: step 2/2. In terms of biological role, catalyzes a reversible aldol reaction between acetaldehyde and D-glyceraldehyde 3-phosphate to generate 2-deoxy-D-ribose 5-phosphate. In Symbiobacterium thermophilum (strain DSM 24528 / JCM 14929 / IAM 14863 / T), this protein is Deoxyribose-phosphate aldolase.